Consider the following 248-residue polypeptide: MIAWLDPHDPFPPVDRALGPESEAPGLLAASAELSPQRLLIAYRQGIFPWYAQGQPVLWWSTDPRMVLRPEDFRVSTTFRKTLRRVLDDPAWEIRIDHAFRETMVACATTARPGQHGTWITEDVIQAYTALHRRGYAHSVETWHAGQRVGGLYGVALGRMFYGESMFAHRTDASKIALAALCAFLGGQGVAMIDCQQETEHLASLGGAPVPRAAFLAHVREAASAPAIVPWHFDKSVLRRWTVRNEQA.

Belongs to the L/F-transferase family.

The protein resides in the cytoplasm. The enzyme catalyses N-terminal L-lysyl-[protein] + L-leucyl-tRNA(Leu) = N-terminal L-leucyl-L-lysyl-[protein] + tRNA(Leu) + H(+). The catalysed reaction is N-terminal L-arginyl-[protein] + L-leucyl-tRNA(Leu) = N-terminal L-leucyl-L-arginyl-[protein] + tRNA(Leu) + H(+). It catalyses the reaction L-phenylalanyl-tRNA(Phe) + an N-terminal L-alpha-aminoacyl-[protein] = an N-terminal L-phenylalanyl-L-alpha-aminoacyl-[protein] + tRNA(Phe). Functionally, functions in the N-end rule pathway of protein degradation where it conjugates Leu, Phe and, less efficiently, Met from aminoacyl-tRNAs to the N-termini of proteins containing an N-terminal arginine or lysine. In Ralstonia pickettii (strain 12J), this protein is Leucyl/phenylalanyl-tRNA--protein transferase.